Here is a 427-residue protein sequence, read N- to C-terminus: Glutamyl-tRNA(Gln) amidotransferase subunit D (427 aa).

The span at 1-18 shows a compositional bias: basic and acidic residues; it reads MTADPGDRVRVTHGDASH. A disordered region spans residues 1–20; that stretch reads MTADPGDRVRVTHGDASHEG. The Asparaginase/glutaminase domain occupies 80–413; sequence PTIALISTGG…DDPEAAMQES (334 aa). Catalysis depends on residues threonine 90, threonine 166, aspartate 167, and lysine 243.

The protein belongs to the asparaginase 1 family. GatD subfamily. In terms of assembly, heterodimer of GatD and GatE.

It carries out the reaction L-glutamyl-tRNA(Gln) + L-glutamine + ATP + H2O = L-glutaminyl-tRNA(Gln) + L-glutamate + ADP + phosphate + H(+). In terms of biological role, allows the formation of correctly charged Gln-tRNA(Gln) through the transamidation of misacylated Glu-tRNA(Gln) in organisms which lack glutaminyl-tRNA synthetase. The reaction takes place in the presence of glutamine and ATP through an activated gamma-phospho-Glu-tRNA(Gln). The GatDE system is specific for glutamate and does not act on aspartate. The sequence is that of Glutamyl-tRNA(Gln) amidotransferase subunit D from Halobacterium salinarum (strain ATCC 29341 / DSM 671 / R1).